A 338-amino-acid polypeptide reads, in one-letter code: Envelope glycoprotein K (338 aa).

An N-terminal signal peptide occupies residues 1–30 (MLAVRSLQHLTTVIFITAYGLVLAWYIVFG). At 31–121 (ASPLHRCIYA…VNCLEALWDT (91 aa)) the chain is on the extracellular side. Positions 31–121 (ASPLHRCIYA…VNCLEALWDT (91 aa)) are involved in fusion. N-linked (GlcNAc...) asparagine; by host glycosylation is found at Asn-48 and Asn-58. Residues 122–140 (QMRLVVVGWFLYLAFVALH) form a helical membrane-spanning segment. Topologically, residues 141 to 212 (QRRCMFGVVS…DPVTFLYHRP (72 aa)) are cytoplasmic. Residues 213 to 233 (AIGVIVGCELLLRFVALGLIV) traverse the membrane as a helical segment. Over 234–243 (GTALISRGAC) the chain is Extracellular. A helical membrane pass occupies residues 244–264 (AITHPLFLTITTWCFVSIIAL). At 265–301 (TELYFILRRGSAPKNAEPAAPRGRSKGWSGVCGRCCS) the chain is on the cytoplasmic side. Positions 265 to 301 (TELYFILRRGSAPKNAEPAAPRGRSKGWSGVCGRCCS) are interaction with UL20. A helical transmembrane segment spans residues 302–322 (IILSGIAVRLCYIAVVAGVVL). Topologically, residues 323–338 (VALRYEQEIQRRLFDL) are extracellular.

It belongs to the alphaherpesvirinae glycoprotein K family. Interacts (via UL20 interaction region) with protein UL20 (via N-terminus); this interaction probably plays a role in the coordinate transport of protein UL20 and gK to the trans-Golgi network (TGN), and is required for the cell surface expression of gK. N-glycosylated.

It localises to the host cell membrane. Its subcellular location is the host endosome membrane. The protein localises to the host Golgi apparatus membrane. Glycoprotein that probably modulates membrane fusion events during secondary envelopment of cytoplasmic capsids that bud into specific trans-Golgi network (TGN)-derived membranes. Also plays a role, together with gB, in virus-induced cell-to-cell fusion (syncytia formation). Seems to block fusion of virions with infected-cell membranes. This chain is Envelope glycoprotein K (gK), found in Human herpesvirus 2 (strain HG52) (HHV-2).